Here is a 450-residue protein sequence, read N- to C-terminus: Phosphoglucosamine mutase (450 aa).

Serine 102 (phosphoserine intermediate) is an active-site residue. The Mg(2+) site is built by serine 102, aspartate 242, aspartate 244, and aspartate 246. Phosphoserine is present on serine 102.

Belongs to the phosphohexose mutase family. The cofactor is Mg(2+). Post-translationally, activated by phosphorylation.

The catalysed reaction is alpha-D-glucosamine 1-phosphate = D-glucosamine 6-phosphate. Functionally, catalyzes the conversion of glucosamine-6-phosphate to glucosamine-1-phosphate. The polypeptide is Phosphoglucosamine mutase (Staphylococcus haemolyticus (strain JCSC1435)).